The chain runs to 133 residues: Holo-[acyl-carrier-protein] synthase (133 aa).

Mg(2+)-binding residues include Asp-8 and Glu-58.

This sequence belongs to the P-Pant transferase superfamily. AcpS family. Requires Mg(2+) as cofactor.

Its subcellular location is the cytoplasm. The catalysed reaction is apo-[ACP] + CoA = holo-[ACP] + adenosine 3',5'-bisphosphate + H(+). Its function is as follows. Transfers the 4'-phosphopantetheine moiety from coenzyme A to a Ser of acyl-carrier-protein. The sequence is that of Holo-[acyl-carrier-protein] synthase from Erythrobacter litoralis (strain HTCC2594).